The following is an 82-amino-acid chain: Large ribosomal subunit protein uL23 (82 aa).

This sequence belongs to the universal ribosomal protein uL23 family. Part of the 50S ribosomal subunit. Contacts protein L29.

Its function is as follows. Binds to 23S rRNA. One of the proteins that surrounds the polypeptide exit tunnel on the outside of the ribosome. This Picrophilus torridus (strain ATCC 700027 / DSM 9790 / JCM 10055 / NBRC 100828 / KAW 2/3) protein is Large ribosomal subunit protein uL23.